The sequence spans 270 residues: Tryptophan synthase alpha chain (270 aa).

Residues Glu-57 and Asp-68 each act as proton acceptor in the active site.

It belongs to the TrpA family. Tetramer of two alpha and two beta chains.

It carries out the reaction (1S,2R)-1-C-(indol-3-yl)glycerol 3-phosphate + L-serine = D-glyceraldehyde 3-phosphate + L-tryptophan + H2O. The protein operates within amino-acid biosynthesis; L-tryptophan biosynthesis; L-tryptophan from chorismate: step 5/5. The alpha subunit is responsible for the aldol cleavage of indoleglycerol phosphate to indole and glyceraldehyde 3-phosphate. The chain is Tryptophan synthase alpha chain from Mycobacterium bovis (strain ATCC BAA-935 / AF2122/97).